Consider the following 131-residue polypeptide: Profilin-2 (131 aa).

The protein belongs to the profilin family. In terms of assembly, occurs in many kinds of cells as a complex with monomeric actin in a 1:1 ratio.

Its subcellular location is the cytoplasm. It localises to the cytoskeleton. In terms of biological role, binds to actin and affects the structure of the cytoskeleton. At high concentrations, profilin prevents the polymerization of actin, whereas it enhances it at low concentrations. By binding to PIP2, it inhibits the formation of IP3 and DG. The sequence is that of Profilin-2 from Malus domestica (Apple).